Here is a 608-residue protein sequence, read N- to C-terminus: Afamin (608 aa).

The N-terminal stretch at M1–A21 is a signal peptide. Albumin domains lie at L22–T210, Q211–E403, and T404–D599. Residue N33 is glycosylated (N-linked (GlcNAc...) asparagine). 10 disulfides stabilise this stretch: C77-C86, C99-C114, C113-C124, C148-C193, C224-C270, C269-C277, C289-C303, C302-C313, C340-C385, and C384-C393. A glycan (N-linked (GlcNAc...) asparagine) is linked at N109. N153 carries N-linked (GlcNAc...) asparagine glycosylation. The segment at A215 to K319 is binding pocket for hydrophobic ligands. A glycan (N-linked (GlcNAc...) asparagine) is linked at N402. 5 disulfides stabilise this stretch: C416–C462, C461–C470, C483–C499, C498–C509, and C580–C589. N-linked (GlcNAc...) asparagine glycosylation occurs at N488. The disordered stretch occupies residues K585–R608.

It belongs to the ALB/AFP/VDB family. In terms of assembly, forms a 1:1 complex with Wnt family members; interacts with WNT1, WNT2B, WNT3, WNT3A, WNT5A, WNT7A, WNT7B, WNT8, WNT9A, WNT9B, WNT10A and WNT10B. N-glycosylated; more than 90% of the glycans are sialylated.

The protein resides in the secreted. Functionally, functions as a carrier for hydrophobic molecules in body fluids. Essential for the solubility and activity of lipidated Wnt family members, including WNT1, WNT2B, WNT3, WNT3A, WNT5A, WNT7A, WNT7B, WNT8, WNT9A, WNT9B, WNT10A and WNT10B. Binds vitamin E. May transport vitamin E in body fluids under conditions where the lipoprotein system is not sufficient. May be involved in the transport of vitamin E across the blood-brain barrier. This chain is Afamin (Afm), found in Rattus norvegicus (Rat).